A 144-amino-acid chain; its full sequence is 3-hydroxyacyl-[acyl-carrier-protein] dehydratase FabZ (144 aa).

His48 is an active-site residue.

Belongs to the thioester dehydratase family. FabZ subfamily.

It localises to the cytoplasm. It carries out the reaction a (3R)-hydroxyacyl-[ACP] = a (2E)-enoyl-[ACP] + H2O. Its function is as follows. Involved in unsaturated fatty acids biosynthesis. Catalyzes the dehydration of short chain beta-hydroxyacyl-ACPs and long chain saturated and unsaturated beta-hydroxyacyl-ACPs. The polypeptide is 3-hydroxyacyl-[acyl-carrier-protein] dehydratase FabZ (Bacillus thuringiensis (strain Al Hakam)).